A 167-amino-acid polypeptide reads, in one-letter code: NADH-ubiquinone oxidoreductase chain 6 (167 aa).

Helical transmembrane passes span 21–41 (SPYYGALATAWLALLAALLLL), 45–65 (IIFPAIILMLIYLGGMLVVFI), 78–98 (PINLTMSALMASFGVMLITMI), and 132–152 (SMFIVAVMILTALLFSILEVV).

It belongs to the complex I subunit 6 family.

The protein localises to the mitochondrion membrane. It carries out the reaction a ubiquinone + NADH + 5 H(+)(in) = a ubiquinol + NAD(+) + 4 H(+)(out). In terms of biological role, core subunit of the mitochondrial membrane respiratory chain NADH dehydrogenase (Complex I) that is believed to belong to the minimal assembly required for catalysis. Complex I functions in the transfer of electrons from NADH to the respiratory chain. The immediate electron acceptor for the enzyme is believed to be ubiquinone. The sequence is that of NADH-ubiquinone oxidoreductase chain 6 (ND6) from Branchiostoma floridae (Florida lancelet).